A 57-amino-acid chain; its full sequence is UPF0391 membrane protein Atu4467 (57 aa).

A run of 2 helical transmembrane segments spans residues 4-24 (WALIFFVISLIAGVFGFTGIS) and 33-53 (ILFFIAVVIFLVFLVLALMAG).

It belongs to the UPF0391 family.

It localises to the cell membrane. The sequence is that of UPF0391 membrane protein Atu4467 from Agrobacterium fabrum (strain C58 / ATCC 33970) (Agrobacterium tumefaciens (strain C58)).